Reading from the N-terminus, the 443-residue chain is Phosphoglucosamine mutase (443 aa).

Catalysis depends on Ser-101, which acts as the Phosphoserine intermediate. Mg(2+) contacts are provided by Ser-101, Asp-239, Asp-241, and Asp-243. Ser-101 carries the phosphoserine modification.

This sequence belongs to the phosphohexose mutase family. It depends on Mg(2+) as a cofactor. Post-translationally, activated by phosphorylation.

The enzyme catalyses alpha-D-glucosamine 1-phosphate = D-glucosamine 6-phosphate. Catalyzes the conversion of glucosamine-6-phosphate to glucosamine-1-phosphate. In Francisella tularensis subsp. tularensis (strain WY96-3418), this protein is Phosphoglucosamine mutase.